Reading from the N-terminus, the 456-residue chain is Chordin-like protein 1 (456 aa).

The first 27 residues, 1 to 27 (MRKKWKMGGMKYIFSLLFFLLLEGGKT), serve as a signal peptide directing secretion. VWFC domains are found at residues 35 to 100 (TYCM…PRCP) and 113 to 179 (KSCE…RVCR). An N-linked (GlcNAc...) asparagine glycan is attached at Asn118. The Cell attachment site motif lies at 179-181 (RGD). The segment at 202-223 (ARHSYHRSHYDPPPSRQAGGLS) is disordered. The VWFC 3 domain occupies 258 to 323 (QVCVSNGKTY…IDGKCCKVCP (66 aa)). N-linked (GlcNAc...) asparagine glycosylation is present at Asn291.

As to expression, expressed in the developing cornea and in the eye anterior segment in addition to the retina. Differentially expressed in the fetal brain. There is high expression in cerebellum and neocortex. Expressed in retinal pericytes.

The protein localises to the secreted. In terms of biological role, antagonizes the function of BMP4 by binding to it and preventing its interaction with receptors. Alters the fate commitment of neural stem cells from gliogenesis to neurogenesis. Contributes to neuronal differentiation of neural stem cells in the brain by preventing the adoption of a glial fate. May play a crucial role in dorsoventral axis formation. May play a role in embryonic bone formation. May also play an important role in regulating retinal angiogenesis through modulation of BMP4 actions in endothelial cells. Plays a role during anterior segment eye development. This is Chordin-like protein 1 (CHRDL1) from Homo sapiens (Human).